We begin with the raw amino-acid sequence, 23 residues long: GIKEFAHSLGKFGKAFVGGILNQ.

As to expression, expressed by the skin glands.

The protein localises to the secreted. Functionally, antimicrobial peptide. The chain is Magainin-R2 from Xenopus ruwenzoriensis (Uganda clawed frog).